Reading from the N-terminus, the 162-residue chain is ATP synthase subunit b (162 aa).

The helical transmembrane segment at 2–22 (LEFNATLLAQIVDFIILLIFL) threads the bilayer.

This sequence belongs to the ATPase B chain family. In terms of assembly, F-type ATPases have 2 components, F(1) - the catalytic core - and F(0) - the membrane proton channel. F(1) has five subunits: alpha(3), beta(3), gamma(1), delta(1), epsilon(1). F(0) has three main subunits: a(1), b(2) and c(10-14). The alpha and beta chains form an alternating ring which encloses part of the gamma chain. F(1) is attached to F(0) by a central stalk formed by the gamma and epsilon chains, while a peripheral stalk is formed by the delta and b chains.

The protein resides in the cell membrane. F(1)F(0) ATP synthase produces ATP from ADP in the presence of a proton or sodium gradient. F-type ATPases consist of two structural domains, F(1) containing the extramembraneous catalytic core and F(0) containing the membrane proton channel, linked together by a central stalk and a peripheral stalk. During catalysis, ATP synthesis in the catalytic domain of F(1) is coupled via a rotary mechanism of the central stalk subunits to proton translocation. Its function is as follows. Component of the F(0) channel, it forms part of the peripheral stalk, linking F(1) to F(0). The protein is ATP synthase subunit b of Pelotomaculum thermopropionicum (strain DSM 13744 / JCM 10971 / SI).